Here is a 279-residue protein sequence, read N- to C-terminus: Oxygen-dependent coproporphyrinogen-III oxidase (279 aa).

Ser102 lines the substrate pocket. A divalent metal cation contacts are provided by His106 and His116. His116 (proton donor) is an active-site residue. Asn118–Arg120 contacts substrate. 2 residues coordinate a divalent metal cation: His149 and His179. The segment at Tyr244–Ala279 is important for dimerization.

Belongs to the aerobic coproporphyrinogen-III oxidase family. In terms of assembly, homodimer. A divalent metal cation is required as a cofactor.

The protein resides in the cytoplasm. The catalysed reaction is coproporphyrinogen III + O2 + 2 H(+) = protoporphyrinogen IX + 2 CO2 + 2 H2O. The protein operates within porphyrin-containing compound metabolism; protoporphyrin-IX biosynthesis; protoporphyrinogen-IX from coproporphyrinogen-III (O2 route): step 1/1. Functionally, involved in the heme biosynthesis. Catalyzes the aerobic oxidative decarboxylation of propionate groups of rings A and B of coproporphyrinogen-III to yield the vinyl groups in protoporphyrinogen-IX. The polypeptide is Oxygen-dependent coproporphyrinogen-III oxidase (Rickettsia bellii (strain OSU 85-389)).